Consider the following 240-residue polypeptide: 1-(5-phosphoribosyl)-5-[(5-phosphoribosylamino)methylideneamino] imidazole-4-carboxamide isomerase (240 aa).

D8 functions as the Proton acceptor in the catalytic mechanism. Residue D130 is the Proton donor of the active site.

The protein belongs to the HisA/HisF family.

The protein resides in the cytoplasm. The enzyme catalyses 1-(5-phospho-beta-D-ribosyl)-5-[(5-phospho-beta-D-ribosylamino)methylideneamino]imidazole-4-carboxamide = 5-[(5-phospho-1-deoxy-D-ribulos-1-ylimino)methylamino]-1-(5-phospho-beta-D-ribosyl)imidazole-4-carboxamide. It participates in amino-acid biosynthesis; L-histidine biosynthesis; L-histidine from 5-phospho-alpha-D-ribose 1-diphosphate: step 4/9. The protein is 1-(5-phosphoribosyl)-5-[(5-phosphoribosylamino)methylideneamino] imidazole-4-carboxamide isomerase of Flavobacterium johnsoniae (strain ATCC 17061 / DSM 2064 / JCM 8514 / BCRC 14874 / CCUG 350202 / NBRC 14942 / NCIMB 11054 / UW101) (Cytophaga johnsonae).